A 598-amino-acid polypeptide reads, in one-letter code: Beta-fructofuranosidase, insoluble isoenzyme 2 (598 aa).

An N-terminal signal peptide occupies residues 1–25 (MGVLGSRVAWAWLVQLLLLQQLAGA). The active site involves D69. 3 N-linked (GlcNAc...) asparagine glycosylation sites follow: N164, N189, and N348.

It belongs to the glycosyl hydrolase 32 family. As to expression, expressed in leaves and flowers. Weakly expressed in seeds. Expressed in growing roots, node and the rapidly elongating zone of the internode.

It localises to the secreted. The protein localises to the cell wall. The enzyme catalyses Hydrolysis of terminal non-reducing beta-D-fructofuranoside residues in beta-D-fructofuranosides.. Functionally, cell wall-associated invertase that cleaves sucrose into glucose and fructose and is required for assimilated carbon partitioning during early grain-filling. May be involved in sucrose unloaded in the ovular and stylar vascular tissues for the stimulation of starch synthesis in the developing endosperm during grain-filling. Sugar homeostasis mediated by CIN2/GIF1 plays an important role in constitutive and induced physical and chemical defense against pathogens. In Oryza sativa subsp. japonica (Rice), this protein is Beta-fructofuranosidase, insoluble isoenzyme 2 (CIN2).